The sequence spans 99 residues: Aspartyl/glutamyl-tRNA(Asn/Gln) amidotransferase subunit C (99 aa).

The protein belongs to the GatC family. As to quaternary structure, heterotrimer of A, B and C subunits.

The enzyme catalyses L-glutamyl-tRNA(Gln) + L-glutamine + ATP + H2O = L-glutaminyl-tRNA(Gln) + L-glutamate + ADP + phosphate + H(+). It carries out the reaction L-aspartyl-tRNA(Asn) + L-glutamine + ATP + H2O = L-asparaginyl-tRNA(Asn) + L-glutamate + ADP + phosphate + 2 H(+). In terms of biological role, allows the formation of correctly charged Asn-tRNA(Asn) or Gln-tRNA(Gln) through the transamidation of misacylated Asp-tRNA(Asn) or Glu-tRNA(Gln) in organisms which lack either or both of asparaginyl-tRNA or glutaminyl-tRNA synthetases. The reaction takes place in the presence of glutamine and ATP through an activated phospho-Asp-tRNA(Asn) or phospho-Glu-tRNA(Gln). This Burkholderia cenocepacia (strain ATCC BAA-245 / DSM 16553 / LMG 16656 / NCTC 13227 / J2315 / CF5610) (Burkholderia cepacia (strain J2315)) protein is Aspartyl/glutamyl-tRNA(Asn/Gln) amidotransferase subunit C.